A 481-amino-acid polypeptide reads, in one-letter code: 3-isopropylmalate dehydratase large subunit (481 aa).

Residues cysteine 363, cysteine 423, and cysteine 426 each coordinate [4Fe-4S] cluster. A disordered region spans residues 432–459 (DQLKPGERSASTSNRNFEGRQGPGGRTH).

Belongs to the aconitase/IPM isomerase family. LeuC type 1 subfamily. As to quaternary structure, heterodimer of LeuC and LeuD. [4Fe-4S] cluster serves as cofactor.

It catalyses the reaction (2R,3S)-3-isopropylmalate = (2S)-2-isopropylmalate. Its pathway is amino-acid biosynthesis; L-leucine biosynthesis; L-leucine from 3-methyl-2-oxobutanoate: step 2/4. Catalyzes the isomerization between 2-isopropylmalate and 3-isopropylmalate, via the formation of 2-isopropylmaleate. This is 3-isopropylmalate dehydratase large subunit from Corynebacterium glutamicum (strain ATCC 13032 / DSM 20300 / JCM 1318 / BCRC 11384 / CCUG 27702 / LMG 3730 / NBRC 12168 / NCIMB 10025 / NRRL B-2784 / 534).